The following is a 297-amino-acid chain: 4-hydroxy-tetrahydrodipicolinate synthase (297 aa).

Thr-49 contributes to the pyruvate binding site. Tyr-137 functions as the Proton donor/acceptor in the catalytic mechanism. Lys-166 (schiff-base intermediate with substrate) is an active-site residue. Ile-208 is a binding site for pyruvate.

The protein belongs to the DapA family. Homotetramer; dimer of dimers.

It is found in the cytoplasm. The catalysed reaction is L-aspartate 4-semialdehyde + pyruvate = (2S,4S)-4-hydroxy-2,3,4,5-tetrahydrodipicolinate + H2O + H(+). The protein operates within amino-acid biosynthesis; L-lysine biosynthesis via DAP pathway; (S)-tetrahydrodipicolinate from L-aspartate: step 3/4. In terms of biological role, catalyzes the condensation of (S)-aspartate-beta-semialdehyde [(S)-ASA] and pyruvate to 4-hydroxy-tetrahydrodipicolinate (HTPA). This is 4-hydroxy-tetrahydrodipicolinate synthase from Prosthecochloris aestuarii (strain DSM 271 / SK 413).